The primary structure comprises 144 residues: Large ribosomal subunit protein uL15 (144 aa).

The segment at Met1–Pro56 is disordered. A compositionally biased stretch (gly residues) spans Arg21–Gly31.

Belongs to the universal ribosomal protein uL15 family. Part of the 50S ribosomal subunit.

Functionally, binds to the 23S rRNA. This is Large ribosomal subunit protein uL15 from Idiomarina loihiensis (strain ATCC BAA-735 / DSM 15497 / L2-TR).